Consider the following 1956-residue polypeptide: Histone-lysine N-methyltransferase SETD1B (1956 aa).

Over residues 1-20 the composition is skewed to basic and acidic residues; it reads MSFKEAKPGERGKNPEDHGR. The segment at 1–46 is disordered; that stretch reads MSFKEAKPGERGKNPEDHGRKQTASWINGMEAGNQPSTSGEKKSHH. The RRM domain maps to 111-199; the sequence is DEFYVGPVPP…NIIHVELDTK (89 aa). 9 disordered regions span residues 226-478, 502-637, 662-696, 926-1148, 1341-1386, 1420-1464, 1512-1553, 1627-1655, and 1766-1790; these read LDAS…LEAE, IAGD…VTPS, GFPP…VTVP, KEPP…DEMQ, EDLP…TLTS, PTFP…VPSP, HLTS…NYET, TKHK…FSPP, and IDTQ…RRSE. Polar residues-rich tracts occupy residues 254–290, 298–312, and 346–361; these read VTPN…QGTP, PFSQ…QTTP, and SSGS…NVTR. The span at 363-373 shows a compositional bias: pro residues; that stretch reads QPEPVQVPRTP. Composition is skewed to polar residues over residues 375-407, 416-432, and 451-464; these read LSHS…PQTS, GPQT…NSAS, and DSTT…SQTP. The span at 517 to 527 shows a compositional bias: low complexity; that stretch reads SPISSSSSQLS. Polar residues-rich tracts occupy residues 535–551 and 575–593; these read GSRY…SSTG and SLCQ…NQSG. The segment covering 594–605 has biased composition (basic and acidic residues); the sequence is RKTESLDKKELV. The segment covering 625–634 has biased composition (acidic residues); sequence EDMEISDDEV. The segment covering 986–1000 has biased composition (acidic residues); that stretch reads SEGEEEVESEGDDGE. Basic and acidic residues predominate over residues 1001–1011; it reads TSDKEDSSSEK. Residues 1068–1122 show a composition bias toward acidic residues; sequence DSSDESEESSEYESSSDSDEKEEEDDEEEELVFGDDQSEDQDLGQEYEVETDREE. Basic and acidic residues predominate over residues 1341–1352; sequence EDLPRTPGRDIV. Polar residues-rich tracts occupy residues 1358–1367 and 1450–1462; these read LGKSQSTETV and EPTS…NSVP. A compositionally biased stretch (basic and acidic residues) spans 1541-1551; it reads SAHEFETEKNY. The segment covering 1628–1638 has biased composition (basic residues); it reads KHKKSRNSRHN. The segment covering 1769 to 1783 has biased composition (polar residues); the sequence is QGKSIPAQPQASTRA. The RxxxRR motif motif lies at 1788–1793; that stretch reads RSEQRR. Residues 1817 to 1934 form the SET domain; that stretch reads KKLRFCKSHI…VNEEITYDYK (118 aa). Tyr1933 is a binding site for S-adenosyl-L-methionine. The region spanning 1940–1956 is the Post-SET domain; that stretch reads VKIPCLCGAENCRGTLN.

This sequence belongs to the class V-like SAM-binding methyltransferase superfamily. As to quaternary structure, component of the SET1B/COMPASS complex.

Its subcellular location is the nucleus speckle. The protein localises to the chromosome. It carries out the reaction L-lysyl(4)-[histone H3] + 3 S-adenosyl-L-methionine = N(6),N(6),N(6)-trimethyl-L-lysyl(4)-[histone H3] + 3 S-adenosyl-L-homocysteine + 3 H(+). Functionally, histone methyltransferase that specifically methylates 'Lys-4' of histone H3, when part of the SET1 histone methyltransferase (HMT) complex, but not if the neighboring 'Lys-9' residue is already methylated. H3 'Lys-4' methylation represents a specific tag for epigenetic transcriptional activation. In Xenopus tropicalis (Western clawed frog), this protein is Histone-lysine N-methyltransferase SETD1B (setd1b).